Consider the following 393-residue polypeptide: Envelope glycoprotein D (393 aa).

Positions 1 to 25 are cleaved as a signal peptide; that stretch reads MGGAAARLGAVILFVVIVGLHGVRG. Positions 25-57 are interaction with TNFRSF14; the sequence is GKYALADASLKMADPNRFRGKDLPVLDQLTDPP. Topologically, residues 26–338 are virion surface; the sequence is KYALADASLK…PYHPPATPNN (313 aa). Residue histidine 64 participates in Zn(2+) binding. 3 cysteine pairs are disulfide-bonded: cysteine 90-cysteine 213, cysteine 130-cysteine 226, and cysteine 142-cysteine 151. N-linked (GlcNAc...) asparagine; by host glycans are attached at residues asparagine 118 and asparagine 145. Aspartate 239 provides a ligand contact to Zn(2+). The segment at 260-304 is profusion; that stretch reads LKIAGWHGPRAPYTSTLLPPELPETPNATQPELAPEDPEDSALLE. Positions 273-300 are disordered; it reads TSTLLPPELPETPNATQPELAPEDPEDS. Asparagine 286 carries N-linked (GlcNAc...) asparagine; by host glycosylation. Residues 339–363 form a helical membrane-spanning segment; sequence MGLIAGAVGGSLLAALVICGIVYWM. Residues 364 to 393 are Intravirion-facing; it reads RRRTRKAPKRIRLPHIREDDQPSSHQPLFY.

It belongs to the herpesviridae glycoprotein D family. In terms of assembly, homodimer. Interacts with host receptor TNFRSF14. Interacts with host receptor NECTIN1. Interacts (via profusion domain) with gB; this interaction occurs in the absence of gH/gL. Interacts (via profusion domain) with gH/gL heterodimer; this interaction occurs in the absence of gB. Associates with the gB-gH/gL-gD complex. Interacts (via C-terminus) with UL11 tegument protein. Interacts with host RSAD2.

The protein resides in the virion membrane. The protein localises to the host Golgi apparatus. Envelope glycoprotein that binds to the host cell entry receptors NECTIN1, TNFRSF14/HVEM and 3-O-sulfated heparan sulfate, promoting the virus entry into host cells. May trigger fusion with host membrane, by recruiting the fusion machinery composed of gB and gH/gL. This is Envelope glycoprotein D (gD) from Homo sapiens (Human).